The following is a 632-amino-acid chain: tRNA uridine 5-carboxymethylaminomethyl modification enzyme MnmG (632 aa).

Residues 15 to 20 (GAGHAG), valine 127, and serine 182 each bind FAD. NAD(+) is bound at residue 276-290 (GARYCPSIEDKIVRF). FAD is bound at residue glutamine 373.

Belongs to the MnmG family. Homodimer. Heterotetramer of two MnmE and two MnmG subunits. Requires FAD as cofactor.

The protein resides in the cytoplasm. Its function is as follows. NAD-binding protein involved in the addition of a carboxymethylaminomethyl (cmnm) group at the wobble position (U34) of certain tRNAs, forming tRNA-cmnm(5)s(2)U34. This Enterococcus faecalis (strain ATCC 700802 / V583) protein is tRNA uridine 5-carboxymethylaminomethyl modification enzyme MnmG.